The sequence spans 223 residues: Ribonuclease HII (223 aa).

The RNase H type-2 domain maps to 32-223 (FHIAGVDEVG…LKGRFRDNMS (192 aa)). A divalent metal cation is bound by residues Asp-38, Glu-39, and Asp-130.

Belongs to the RNase HII family. Mn(2+) serves as cofactor. It depends on Mg(2+) as a cofactor.

The protein localises to the cytoplasm. It carries out the reaction Endonucleolytic cleavage to 5'-phosphomonoester.. Functionally, endonuclease that specifically degrades the RNA of RNA-DNA hybrids. In Bartonella quintana (strain Toulouse) (Rochalimaea quintana), this protein is Ribonuclease HII.